We begin with the raw amino-acid sequence, 131 residues long: Small ribosomal subunit protein uS9 (131 aa).

It belongs to the universal ribosomal protein uS9 family.

This Mycoplasmopsis synoviae (strain 53) (Mycoplasma synoviae) protein is Small ribosomal subunit protein uS9.